The following is a 617-amino-acid chain: V-type proton ATPase catalytic subunit A (617 aa).

Residue Gly-250–Thr-257 coordinates ATP.

Belongs to the ATPase alpha/beta chains family. In terms of assembly, V-ATPase is a heteromultimeric enzyme made up of two complexes: the ATP-hydrolytic V1 complex and the proton translocation V0 complex. The V1 complex consists of three catalytic AB heterodimers that form a heterohexamer, three peripheral stalks each consisting of EG heterodimers, one central rotor including subunits D and F, and the regulatory subunits C and H. The proton translocation complex V0 consists of the proton transport subunit a, a ring of proteolipid subunits c9c'', rotary subunit d, subunits e and f, and the accessory subunits VhaAC45 and ATP6AP2.

The catalysed reaction is ATP + H2O + 4 H(+)(in) = ADP + phosphate + 5 H(+)(out). With respect to regulation, ATP hydrolysis occurs at the interface between the nucleotide-binding domains of subunits A and B. ATP hydrolysis triggers a conformational change in the subunits D and F, which induces a shift of subunit d. The c-ring is subsequently rotated and results in a continuous proton translocation across the membrane. In terms of biological role, catalytic subunit of the V1 complex of vacuolar(H+)-ATPase (V-ATPase), a multisubunit enzyme composed of a peripheral complex (V1) that hydrolyzes ATP and a membrane integral complex (V0) that translocates protons. V-ATPase is responsible for acidifying and maintaining the pH of intracellular compartments and in some cell types, is targeted to the plasma membrane, where it is responsible for acidifying the extracellular environment. This is V-type proton ATPase catalytic subunit A (VHAA) from Manduca sexta (Tobacco hawkmoth).